We begin with the raw amino-acid sequence, 119 residues long: RNA guanine-N7 methyltransferase activating subunit (119 aa).

The interaction with RNMT stretch occupies residues 1–55; that stretch reads MSDTSEEIPNFEEMFASRFTKDDKEYQEYLKRPPESPPIVEEWNSRAGGNQRNRG. A disordered region spans residues 30 to 119; sequence LKRPPESPPI…HNQRPPYGYY (90 aa). Ser-36 is modified (phosphoserine). The RNMT-activating domain motif lies at 36-42; the sequence is SPPIVEE. Residues 47-61 are compositionally biased toward polar residues; that stretch reads AGGNQRNRGNWLQDN. Positions 56-119 are RNA-binding; that stretch reads NWLQDNRQFR…HNQRPPYGYY (64 aa). The segment covering 62-73 has biased composition (basic and acidic residues); sequence RQFRGRDNRRGW. The residue at position 85 (Arg-85) is an Omega-N-methylarginine. Phosphoserine is present on Ser-86. Low complexity predominate over residues 89-112; the sequence is NNNYPQQRPEPYYQQQYTQYGHNQ.

It belongs to the RAM family. As to quaternary structure, interacts with RNMT; this interaction enhances mRNA binding and cap methyltransferase activity.

It localises to the nucleus. In terms of biological role, regulatory subunit of the mRNA-capping methyltransferase RNMT:RAMAC complex that methylates the N7 position of the added guanosine to the 5'-cap structure of mRNAs. Promotes the recruitment of the methyl donor, S-adenosyl-L-methionine, to RNMT. Regulates RNMT expression by a post-transcriptional stabilizing mechanism. Binds RNA. The sequence is that of RNA guanine-N7 methyltransferase activating subunit (Ramac) from Mus musculus (Mouse).